The primary structure comprises 478 residues: Protein MAINTENANCE OF MERISTEMS (478 aa).

The interval 459-478 is disordered; that stretch reads ASTTNKRKRREEQQQTDWSE. The short motif at 464–468 is the Nuclear localization signal element; that stretch reads KRKRR.

Expressed in root meristem, root vasculature, shoot apical meristem (SAM), leaf vasculature and ovules.

Its subcellular location is the nucleus. In terms of biological role, required for the organization of the root apical meristem (RAM) and the shoot apical meristem (SAM). Required to maintain genome stability and cell division activity in meristematic cells. The sequence is that of Protein MAINTENANCE OF MERISTEMS from Arabidopsis thaliana (Mouse-ear cress).